A 231-amino-acid chain; its full sequence is ADP-ribosylation factor-like protein 6-interacting protein 4 (231 aa).

Over residues 1-19 the composition is skewed to basic residues; it reads MAHVSSRKRSRSRSRSRGR. A disordered region spans residues 1–154; it reads MAHVSSRKRS…EDNDGPVLTD (154 aa). The segment covering 20–34 has biased composition (basic and acidic residues); the sequence is RGSEKRSKRSSKDSS. Positions 64-89 are enriched in low complexity; that stretch reads TSRSSSSSSSSSSSSSSSSTSSSSSS. Residues 92 to 119 show a composition bias toward basic residues; sequence RKKRGKHKDKKKRKKKKKRKKKMKRKGK. Phosphoserine occurs at positions 142 and 176. K193 participates in a covalent cross-link: Glycyl lysine isopeptide (Lys-Gly) (interchain with G-Cter in SUMO2).

It belongs to the ARL6IP4 family. Interacts with ARL6. Interacts with ZCCHC17. Interacts with SRSF2.

Its subcellular location is the nucleus. The protein localises to the nucleolus. It localises to the nucleus speckle. Functionally, involved in modulating alternative pre-mRNA splicing with either 5' distal site activation or preferential use of 3' proximal site. This Rattus norvegicus (Rat) protein is ADP-ribosylation factor-like protein 6-interacting protein 4 (Arl6ip4).